The primary structure comprises 210 residues: Putative methyltransferase ECU09_1500 (210 aa).

It belongs to the methyltransferase superfamily.

The polypeptide is Putative methyltransferase ECU09_1500 (Encephalitozoon cuniculi (strain GB-M1) (Microsporidian parasite)).